The primary structure comprises 225 residues: Ferric nitrobindin-like protein (225 aa).

Residues 78–84 (GVWRGTG) carry the GXWXGXG motif.

The protein belongs to the nitrobindin family.

The protein is Ferric nitrobindin-like protein of Corynebacterium diphtheriae (strain ATCC 700971 / NCTC 13129 / Biotype gravis).